Here is a 730-residue protein sequence, read N- to C-terminus: Patatin-like phospholipase domain-containing protein CIMG_04897 (730 aa).

The segment covering 1-11 has biased composition (basic residues); that stretch reads MTANSSRRRLQ. The tract at residues 1 to 26 is disordered; sequence MTANSSRRRLQMKSPRTDGDEKEEDY. The helical transmembrane segment at 97 to 117 threads the bilayer; the sequence is WPFLLFVLSWIVFLGALYILT. One can recognise a PNPLA domain in the interval 281 to 472; sequence LCLSGGATLA…RTDIPLKALD (192 aa). A GXSXG motif is present at residues 312 to 316; the sequence is GTSGG. Ser314 functions as the Nucleophile in the catalytic mechanism. The active-site Proton acceptor is the Asp459. The segment at 667–730 is disordered; that stretch reads GHFREAPTSH…QGQSSGTKIG (64 aa). The span at 721–730 shows a compositional bias: polar residues; it reads QGQSSGTKIG.

The protein belongs to the PLPL family.

The protein localises to the membrane. Its function is as follows. Probable lipid hydrolase. The polypeptide is Patatin-like phospholipase domain-containing protein CIMG_04897 (Coccidioides immitis (strain RS) (Valley fever fungus)).